Consider the following 353-residue polypeptide: Mas-related G-protein coupled receptor member B5 (353 aa).

The Extracellular portion of the chain corresponds to 1-67 (MPDSPTESYG…SCIITFNTLN (67 aa)). N-linked (GlcNAc...) asparagine glycans are attached at residues Asn-26 and Asn-44. The chain crosses the membrane as a helical span at residues 68 to 90 (FLTATISVVGTAGNATVLRLLGF). The Cytoplasmic portion of the chain corresponds to 91–96 (HMHRYA). The helical transmembrane segment at 97–117 (FSVYVFNLAGADFLYLCTQTV) threads the bilayer. Residues 118–131 (YSLECVLQFDNSYF) are Extracellular-facing. Residues 132-152 (YFLLTILMFAYLAALCMIPAI) traverse the membrane as a helical segment. Over 153–180 (STERCLSVTWPIWYHCQRPRHTSATVCA) the chain is Cytoplasmic. Residues 181-201 (LFWAFSLLLRLLLGQGCGFLF) form a helical membrane-spanning segment. Topologically, residues 202-213 (GKYDYYFCRYCS) are extracellular. A helical membrane pass occupies residues 214 to 234 (FITTAFLIVLFVVPFVSSLAM). Residues 235-253 (LTKIICGSHRIPVTRFYVT) are Cytoplasmic-facing. A helical transmembrane segment spans residues 254 to 274 (IAVTVLVFTFFGLPVGIISLL). At 275-289 (LPRIVVFRGVFYIYK) the chain is on the extracellular side. The helical transmembrane segment at 290 to 310 (IVTFLYSVNCCANPIIYFLIG) threads the bilayer. At 311–353 (SIRHHRLQRQSLKLLLQRAMQDTPEEEGGVKGPSQKSNELEIV) the chain is on the cytoplasmic side. Positions 333-353 (TPEEEGGVKGPSQKSNELEIV) are disordered.

Belongs to the G-protein coupled receptor 1 family. Mas subfamily. In terms of tissue distribution, expressed strongly in newborn dorsal root ganglia, adult dorsal root ganglia and trigeminal ganlia.

It localises to the membrane. In terms of biological role, orphan receptor. Probably involved in the function of nociceptive neurons. May regulate nociceptor function and/or development, including the sensation or modulation of pain. This Rattus norvegicus (Rat) protein is Mas-related G-protein coupled receptor member B5 (Mrgprb5).